A 110-amino-acid chain; its full sequence is ORC1-type DNA replication protein 3 (110 aa).

An ATP-binding site is contributed by 8–12 (SGKSL).

Belongs to the CDC6/cdc18 family.

In terms of biological role, involved in regulation of DNA replication. This is ORC1-type DNA replication protein 3 (orc3) from Halobacterium salinarum (strain ATCC 700922 / JCM 11081 / NRC-1) (Halobacterium halobium).